The primary structure comprises 427 residues: Trigger factor (427 aa).

The 86-residue stretch at 163–248 (GDTVILDFEG…LHEIKTKEVP (86 aa)) folds into the PPIase FKBP-type domain.

It belongs to the FKBP-type PPIase family. Tig subfamily.

It is found in the cytoplasm. It catalyses the reaction [protein]-peptidylproline (omega=180) = [protein]-peptidylproline (omega=0). Involved in protein export. Acts as a chaperone by maintaining the newly synthesized protein in an open conformation. Functions as a peptidyl-prolyl cis-trans isomerase. The sequence is that of Trigger factor from Listeria innocua serovar 6a (strain ATCC BAA-680 / CLIP 11262).